The chain runs to 93 residues: Small ribosomal subunit protein uS19 (93 aa).

This sequence belongs to the universal ribosomal protein uS19 family.

Protein S19 forms a complex with S13 that binds strongly to the 16S ribosomal RNA. The sequence is that of Small ribosomal subunit protein uS19 from Rubrobacter xylanophilus (strain DSM 9941 / JCM 11954 / NBRC 16129 / PRD-1).